The primary structure comprises 102 residues: Large ribosomal subunit protein uL24 (102 aa).

Belongs to the universal ribosomal protein uL24 family. As to quaternary structure, part of the 50S ribosomal subunit.

Functionally, one of two assembly initiator proteins, it binds directly to the 5'-end of the 23S rRNA, where it nucleates assembly of the 50S subunit. Its function is as follows. One of the proteins that surrounds the polypeptide exit tunnel on the outside of the subunit. The protein is Large ribosomal subunit protein uL24 of Paraburkholderia xenovorans (strain LB400).